The chain runs to 297 residues: Phosphatidylinositol N-acetylglucosaminyltransferase subunit C (297 aa).

Helical transmembrane passes span 51–71 (VVFE…FVVI), 80–100 (LAPH…YVLF), 117–137 (WADL…SPVL), 153–173 (SVFM…AAIV), 174–194 (SSTL…SRLP), 196–216 (SLHA…WPML), 227–244 (SYVG…GGLL), and 250–270 (GAVL…FYLI).

It belongs to the PIGC family. As to quaternary structure, component of the glycosylphosphatidylinositol-N-acetylglucosaminyltransferase (GPI-GnT) complex composed at least by PIGA, PIGC, PIGH, PIGP, PIGQ, PIGY and DPM2. Interacts with PIGQ. Interacts with the heterodimer PIGA:PIGH.

It is found in the endoplasmic reticulum membrane. The protein operates within glycolipid biosynthesis; glycosylphosphatidylinositol-anchor biosynthesis. Its function is as follows. Part of the glycosylphosphatidylinositol-N-acetylglucosaminyltransferase (GPI-GnT) complex that catalyzes the transfer of N-acetylglucosamine from UDP-N-acetylglucosamine to phosphatidylinositol and participates in the first step of GPI biosynthesis. This chain is Phosphatidylinositol N-acetylglucosaminyltransferase subunit C, found in Homo sapiens (Human).